Consider the following 538-residue polypeptide: Probable inorganic phosphate transporter 1-4 (538 aa).

The Cytoplasmic portion of the chain corresponds to 1–23 (MAGELKVLNALDSAKTQWYHFTA). A helical membrane pass occupies residues 24 to 44 (IVIAGMGFFTDAYDLFSISLV). At 45–69 (TKLLGRIYYFNPASKSPGSLPPNVS) the chain is on the extracellular side. Residues 70 to 90 (AAVNGVAFCGTLAGQLFFGWL) form a helical membrane-spanning segment. Residues 91–98 (GDKMGRKK) lie on the Cytoplasmic side of the membrane. The chain crosses the membrane as a helical span at residues 99 to 119 (VYGMTLMLMVICCLASGLSFG). Topologically, residues 120–123 (SSAK) are extracellular. A helical membrane pass occupies residues 124-144 (GVMATLCFFRFWLGFGIGGDY). The Cytoplasmic segment spans residues 145–163 (PLSATIMSEYANKRTRGAF). Residues 164-184 (IAAVFAMQGFGNLTGGIVAII) form a helical membrane-spanning segment. Topologically, residues 185 to 210 (VSAAFKARFDAPAYRDDRAGSTVPQA) are extracellular. A helical membrane pass occupies residues 211-231 (DYAWRIVLMFGAIPALLTYYW). Residues 232 to 294 (RMKMPETARY…RQFLRRHGRH (63 aa)) are Cytoplasmic-facing. A helical membrane pass occupies residues 295–315 (LLGTTVCWFVLDIAFYSSNLF). The Extracellular segment spans residues 316-346 (QKDIYTAVQWLPKADTMSALEEMFKISRAQT). The helical transmembrane segment at 347–367 (LVALCGTIPGYWFTVFFIDII) threads the bilayer. Over 368–369 (GR) the chain is Cytoplasmic. The helical transmembrane segment at 370-390 (FVIQLGGFFFMTAFMLGLAVP) threads the bilayer. The Extracellular portion of the chain corresponds to 391–396 (YHHWTT). A helical transmembrane segment spans residues 397 to 417 (PGNHIGFVVMYAFTFFFANFG). Over 418–440 (PNSTTFIVPAEIFPARLRSTCHG) the chain is Cytoplasmic. A helical transmembrane segment spans residues 441-461 (ISAAAGKAGAIVGSFGFLYAA). Residues 462 to 481 (QSTDASKTDAGYPPGIGVRN) are Extracellular-facing. A helical membrane pass occupies residues 482–502 (SLFFLAGCNVIGFFFTFLVPE). Residues 503–538 (SKGKSLEELSGENEDDDDVPEAPSTADHRTAPAPPA) are Cytoplasmic-facing. Residues 507 to 538 (SLEELSGENEDDDDVPEAPSTADHRTAPAPPA) are disordered. Residues 511 to 522 (LSGENEDDDDVP) are compositionally biased toward acidic residues.

The protein belongs to the major facilitator superfamily. Phosphate:H(+) symporter (TC 2.A.1.9) family.

It is found in the membrane. Its function is as follows. High-affinity transporter for external inorganic phosphate. The sequence is that of Probable inorganic phosphate transporter 1-4 (PHT1-4) from Oryza sativa subsp. indica (Rice).